We begin with the raw amino-acid sequence, 428 residues long: Trigger factor (428 aa).

In terms of domain architecture, PPIase FKBP-type spans 163–248; it reads GDTAVIDFEG…VHEIKEKRLP (86 aa).

It belongs to the FKBP-type PPIase family. Tig subfamily.

Its subcellular location is the cytoplasm. It carries out the reaction [protein]-peptidylproline (omega=180) = [protein]-peptidylproline (omega=0). Involved in protein export. Acts as a chaperone by maintaining the newly synthesized protein in an open conformation. Functions as a peptidyl-prolyl cis-trans isomerase. This Geobacillus sp. (strain WCH70) protein is Trigger factor.